The following is a 60-amino-acid chain: Large ribosomal subunit protein bL32 (60 aa).

It belongs to the bacterial ribosomal protein bL32 family.

This chain is Large ribosomal subunit protein bL32, found in Streptococcus pneumoniae serotype 4 (strain ATCC BAA-334 / TIGR4).